The following is a 424-amino-acid chain: 5-methylthioadenosine/S-adenosylhomocysteine deaminase (424 aa).

Zn(2+) contacts are provided by H60 and H62. Substrate-binding residues include E89 and H181. Residue H208 participates in Zn(2+) binding. Residues E211 and D296 each coordinate substrate. D296 is a Zn(2+) binding site.

It belongs to the metallo-dependent hydrolases superfamily. MTA/SAH deaminase family. The cofactor is Zn(2+).

It catalyses the reaction S-adenosyl-L-homocysteine + H2O + H(+) = S-inosyl-L-homocysteine + NH4(+). The enzyme catalyses S-methyl-5'-thioadenosine + H2O + H(+) = S-methyl-5'-thioinosine + NH4(+). In terms of biological role, catalyzes the deamination of 5-methylthioadenosine and S-adenosyl-L-homocysteine into 5-methylthioinosine and S-inosyl-L-homocysteine, respectively. Is also able to deaminate adenosine. This Thermococcus onnurineus (strain NA1) protein is 5-methylthioadenosine/S-adenosylhomocysteine deaminase.